A 976-amino-acid chain; its full sequence is Chloride channel protein 1 (976 aa).

Topologically, residues 1 to 118 (MQPSQSLRRG…VVRRKLGEDW (118 aa)) are cytoplasmic. Residues 71 to 92 (DKEQDTGMSKKMGSSESMDSKD) are disordered. Residues 77–87 (GMSKKMGSSES) are compositionally biased toward low complexity. A helical transmembrane segment spans residues 119-150 (IFLVLLGLLMALVSWSMDYVSAKSLQAYKWSY). Residues 151–158 (YQMQPNLP) are Extracellular-facing. A helical membrane pass occupies residues 159 to 179 (LQYLVWVTFPLTLILFSAVFC). At 180–183 (HLIS) the chain is on the cytoplasmic side. The note=Loop between two helices intramembrane region spans 184 to 189 (PQAVGS). The Selectivity filter part_1 signature appears at 188–192 (GSGIP). Ser189 contributes to the chloride binding site. The helical intramembrane region spans 190–195 (GIPEMK). The Cytoplasmic portion of the chain corresponds to 196–208 (TILRGVILKEYLT). An intramembrane region (helical) is located at residues 209 to 224 (LKAFVAKVVALTAGLG). Residues 225-230 (SGIPVG) constitute an intramembrane region (note=Loop between two helices). The short motif at 230 to 234 (GKEGP) is the Selectivity filter part_2 element. The segment at residues 231 to 246 (KEGPFVHIASICAAVL) is an intramembrane region (helical). Topologically, residues 247–268 (SKFMSMFCGVYEQPYYYTDMLT) are cytoplasmic. 2 consecutive intramembrane regions (helical) follow at residues 269-280 (VGCAVGVGCCFG) and 281-290 (TPLGGVLFSI). The Cytoplasmic portion of the chain corresponds to 291 to 301 (EVTSTYFAVRN). Residues 302–321 (YWRGFFAATFSAFVFRVLAV) traverse the membrane as a helical segment. Residues 322–347 (WNKDAVTITALFRTNFRMDFPFDLQE) lie on the Extracellular side of the membrane. A helical membrane pass occupies residues 348–376 (LPAFAIIGICCGFLGAVFVYLHRQVMLGV). The Cytoplasmic portion of the chain corresponds to 377–390 (RKHKALSQFLAKHR). Residues 391–408 (LLYPGIVTFIIASFTFPP) form a helical membrane-spanning segment. Over 409–414 (GIGQFM) the chain is Extracellular. An intramembrane region (note=Loop between two helices) is located at residues 415–418 (AGEL). Positions 419-426 (MPREAIST) form an intramembrane region, helical. The Extracellular portion of the chain corresponds to 427–457 (LFDNNTWVKHVGDPESLGRSAVWIHPRVNVI). The segment at residues 458 to 475 (IIIFLFFIMKFWMSIVAT) is an intramembrane region (helical). An intramembrane region (note=Loop between two helices) is located at residues 476-482 (TMPIPCG). A Selectivity filter part_3 motif is present at residues 482–486 (GGFMP). Residues 483–498 (GFMPVFVLGAAFGRLV) constitute an intramembrane region (helical). Position 484 (Phe484) interacts with chloride. At 499–521 (GEIMAMLFPDGILFDDIIYKILP) the chain is on the extracellular side. Positions 522-538 (GGYAVIGAAALTGAVSH) form an intramembrane region, helical. The segment at residues 539-540 (TV) is an intramembrane region (note=Loop between two helices). The segment at residues 541–554 (STAVICFELTGQIA) is an intramembrane region (helical). The Extracellular portion of the chain corresponds to 555-557 (HIL). An intramembrane region (helical) is located at residues 558–571 (PMMVAVILANMVAQ). Residues 572–575 (SLQP) constitute an intramembrane region (note=Loop between two helices). The helical intramembrane region spans 576-578 (SLY). A chloride-binding site is contributed by Tyr578. Over 579–976 (DSIIQVKKLP…DEEDEDELIL (398 aa)) the chain is Cytoplasmic. Positions 609-668 (MVRDVKFVSATCTYGELRTLLQTTTVKTLPLVDSKDSMILLGSVERSELQSLLQRHLGPE) constitute a CBS 1 domain. The interval 707–759 (DEDEDEDLSGKPELPPLPPPHPLPSAPLSSEESNGPLPSHKQQPEAPEPADQR) is disordered. Residues 719 to 731 (ELPPLPPPHPLPS) are compositionally biased toward pro residues. The CBS 2 domain occupies 816 to 871 (IDQSPFQLVEQTSLHKTHTLFSLLGLHLAYVTSMGKLRGVLALEELQKAIEGHTKS). The tract at residues 872–976 (GVQLRPPLAS…DEEDEDELIL (105 aa)) is disordered. Ser881 carries the post-translational modification Phosphoserine. The segment covering 914–925 (SPEPPAPSPSPA) has biased composition (pro residues). Acidic residues-rich tracts occupy residues 938 to 955 (ELEELELGESPGLEEELA) and 967 to 976 (DEEDEDELIL).

This sequence belongs to the chloride channel (TC 2.A.49) family. ClC-1/CLCN1 subfamily. In terms of assembly, homodimer.

Its subcellular location is the cell membrane. It localises to the sarcolemma. The protein resides in the T-tubule. The catalysed reaction is chloride(in) = chloride(out). The enzyme catalyses thiocyanate(in) = thiocyanate(out). It catalyses the reaction bromide(in) = bromide(out). It carries out the reaction nitrate(in) = nitrate(out). The catalysed reaction is iodide(out) = iodide(in). Modulated by membrane voltage with depolarization favouring channel opening and hyperpolarization favouring channel closure. Inhibited by acidic pH and ATP binding due to a shift of voltage dependence of common gating to more positive voltages. Inhibited by 9-anthracene-carboxylic. Its function is as follows. Voltage-gated chloride channel involved in skeletal muscle excitability. Generates most of the plasma membrane chloride conductance in skeletal muscle fibers, stabilizes the resting membrane potential and contributes to the repolarization phase during action potential firing. Forms a homodimeric channel where each subunit has its own ion conduction pathway. Conducts double-barreled currents controlled by two types of gates, two fast glutamate gates that control each subunit independently and a slow common gate that opens and shuts off both subunits simultaneously. Has a significant open probability at muscle resting potential and is further activated upon membrane depolarization. Permeable to small monovalent anions with ion selectivity for chloride &gt; thiocyanate &gt; bromide &gt; nitrate &gt; iodide. This is Chloride channel protein 1 (CLCN1) from Canis lupus familiaris (Dog).